Consider the following 227-residue polypeptide: Phosphoribosylformylglycinamidine synthase subunit PurQ (227 aa).

The Glutamine amidotransferase type-1 domain maps to 3–225 (FAVIVFPGSN…LKQWRETYVV (223 aa)). The active-site Nucleophile is Cys86. Active-site residues include His194 and Glu196.

As to quaternary structure, part of the FGAM synthase complex composed of 1 PurL, 1 PurQ and 2 PurS subunits.

The protein resides in the cytoplasm. The catalysed reaction is N(2)-formyl-N(1)-(5-phospho-beta-D-ribosyl)glycinamide + L-glutamine + ATP + H2O = 2-formamido-N(1)-(5-O-phospho-beta-D-ribosyl)acetamidine + L-glutamate + ADP + phosphate + H(+). The enzyme catalyses L-glutamine + H2O = L-glutamate + NH4(+). It participates in purine metabolism; IMP biosynthesis via de novo pathway; 5-amino-1-(5-phospho-D-ribosyl)imidazole from N(2)-formyl-N(1)-(5-phospho-D-ribosyl)glycinamide: step 1/2. Its function is as follows. Part of the phosphoribosylformylglycinamidine synthase complex involved in the purines biosynthetic pathway. Catalyzes the ATP-dependent conversion of formylglycinamide ribonucleotide (FGAR) and glutamine to yield formylglycinamidine ribonucleotide (FGAM) and glutamate. The FGAM synthase complex is composed of three subunits. PurQ produces an ammonia molecule by converting glutamine to glutamate. PurL transfers the ammonia molecule to FGAR to form FGAM in an ATP-dependent manner. PurS interacts with PurQ and PurL and is thought to assist in the transfer of the ammonia molecule from PurQ to PurL. This is Phosphoribosylformylglycinamidine synthase subunit PurQ from Bacillus cereus (strain B4264).